The primary structure comprises 380 residues: GDP-mannose:cellobiosyl-diphosphopolyprenol alpha-mannosyltransferase (380 aa).

This sequence belongs to the glycosyltransferase group 1 family. Glycosyltransferase 4 subfamily.

It catalyses the reaction beta-D-Glc-(1-&gt;4)-alpha-D-Glc-di-trans,octa-cis-undecaprenyl diphosphate + GDP-alpha-D-mannose = alpha-D-Man-(1-&gt;3)-beta-D-Glc-(1-&gt;4)-alpha-D-Glc-1-di-trans,octa-cis-undecaprenyl diphosphate + GDP + H(+). Functionally, involved in the biosynthesis of the exopolysaccharide xanthan, a polymer that is comprised of repeating pentasaccharide units with the structure of a beta-(1,4)-linked D-glucose backbone with trisaccharide side chains composed of mannose-beta-(1,4)-glucuronic acid-beta-(1,2)-mannose attached to alternate glucose residues in the backbone by alpha-(1,3) linkages. Xanthan is involved in pathogenicity but has also been used in a variety of applications as a specialty polymer for commercial applications, including food additives, where they act as viscosifying, stabilizing, emulsifying, or gelling agents. The sequence is that of GDP-mannose:cellobiosyl-diphosphopolyprenol alpha-mannosyltransferase (gumH) from Xanthomonas oryzae pv. oryzae (strain PXO99A).